A 315-amino-acid chain; its full sequence is Initiation factor TFIIB homolog (315 aa).

It belongs to the asfivirus C315R family.

Putative initation factor. In Ornithodoros (relapsing fever ticks), this protein is Initiation factor TFIIB homolog.